Reading from the N-terminus, the 56-residue chain is Large ribosomal subunit protein bL32 (56 aa).

It belongs to the bacterial ribosomal protein bL32 family.

The polypeptide is Large ribosomal subunit protein bL32 (Prochlorococcus marinus (strain MIT 9301)).